A 447-amino-acid chain; its full sequence is Probable glycine dehydrogenase (decarboxylating) subunit 1 (447 aa).

Belongs to the GcvP family. N-terminal subunit subfamily. As to quaternary structure, the glycine cleavage system is composed of four proteins: P, T, L and H. In this organism, the P 'protein' is a heterodimer of two subunits.

It carries out the reaction N(6)-[(R)-lipoyl]-L-lysyl-[glycine-cleavage complex H protein] + glycine + H(+) = N(6)-[(R)-S(8)-aminomethyldihydrolipoyl]-L-lysyl-[glycine-cleavage complex H protein] + CO2. The glycine cleavage system catalyzes the degradation of glycine. The P protein binds the alpha-amino group of glycine through its pyridoxal phosphate cofactor; CO(2) is released and the remaining methylamine moiety is then transferred to the lipoamide cofactor of the H protein. In Macrococcus caseolyticus (strain JCSC5402) (Macrococcoides caseolyticum), this protein is Probable glycine dehydrogenase (decarboxylating) subunit 1.